Reading from the N-terminus, the 696-residue chain is DNA topoisomerase 6 subunit B (696 aa).

Residues M1–K36 are disordered. Low complexity predominate over residues A20–K36. Residues N88, D187, T208–K209, G217–K224, and K543 each bind ATP.

It belongs to the TOP6B family. In terms of assembly, homodimer. Heterotetramer of two TOP6A and two TOP6B subunits. Interacts with SPO11-4.

Its subcellular location is the nucleus. The catalysed reaction is ATP-dependent breakage, passage and rejoining of double-stranded DNA.. Functionally, component of the DNA topoisomerase VI involved in chromatin organization and progression of endoreduplication cycles. Relaxes both positive and negative superturns and exhibits a strong decatenase activity. The B subunit binds ATP. The polypeptide is DNA topoisomerase 6 subunit B (TOP6B) (Oryza sativa subsp. japonica (Rice)).